The sequence spans 87 residues: Mu-theraphotoxin-Hs1a (87 aa).

A signal peptide spans 1–24 (MVNMKASMFLTFAGLVLLFVVCYA). Positions 25–52 (SESEEKEFPKEMLSSIFAVDNDFKQEER) are excised as a propeptide. 3 disulfide bridges follow: cysteine 54/cysteine 67, cysteine 61/cysteine 72, and cysteine 66/cysteine 79.

The protein belongs to the neurotoxin 10 (Hwtx-1) family. 51 (Hntx-8) subfamily. Hntx-8 sub-subfamily. Expressed by the venom gland.

It is found in the secreted. Probable sodium channel pore blocker that dose-dependently inhibits voltage-gated sodium channels (VGSC) on DUM neurons in a way similar to tetrodotoxin. Has no effect on the kinetics of activation and inactivation. Seems not to interact with VGSC in an inactivated state. In vivo, reversibly paralyzes cockroaches, and can enhance the muscular contraction elicited by stimulating its nerve. This chain is Mu-theraphotoxin-Hs1a, found in Cyriopagopus schmidti (Chinese bird spider).